We begin with the raw amino-acid sequence, 394 residues long: 1-deoxy-D-xylulose 5-phosphate reductoisomerase (394 aa).

Residues T14, G15, S16, I17, G40, and N128 each coordinate NADPH. K129 contacts 1-deoxy-D-xylulose 5-phosphate. E130 contacts NADPH. D154 is a binding site for Mn(2+). 1-deoxy-D-xylulose 5-phosphate contacts are provided by S155, E156, S180, and H203. E156 contacts Mn(2+). Residue G209 coordinates NADPH. S216, N221, K222, and E225 together coordinate 1-deoxy-D-xylulose 5-phosphate. E225 serves as a coordination point for Mn(2+).

It belongs to the DXR family. Requires Mg(2+) as cofactor. Mn(2+) serves as cofactor.

The enzyme catalyses 2-C-methyl-D-erythritol 4-phosphate + NADP(+) = 1-deoxy-D-xylulose 5-phosphate + NADPH + H(+). The protein operates within isoprenoid biosynthesis; isopentenyl diphosphate biosynthesis via DXP pathway; isopentenyl diphosphate from 1-deoxy-D-xylulose 5-phosphate: step 1/6. Its function is as follows. Catalyzes the NADPH-dependent rearrangement and reduction of 1-deoxy-D-xylulose-5-phosphate (DXP) to 2-C-methyl-D-erythritol 4-phosphate (MEP). The chain is 1-deoxy-D-xylulose 5-phosphate reductoisomerase from Xylella fastidiosa (strain M23).